The chain runs to 169 residues: MPLLDSFTVDHTRMQAPAVRIAKTMKTPKGDVITVFDLRFCVPNKEILSERGIHTLEHLYAGFMRDHLNGDSVEIIDISPMGCRTGFYMSLIGTPAEADVAQAWLASMNDVLKVAEQAQIPELNEYQCGTFDMHSLDQAQSIARSIIAAGITVNKNDELKLSDEILNGL.

Positions 54, 58, and 128 each coordinate Fe cation.

It belongs to the LuxS family. In terms of assembly, homodimer. Fe cation serves as cofactor.

It carries out the reaction S-(5-deoxy-D-ribos-5-yl)-L-homocysteine = (S)-4,5-dihydroxypentane-2,3-dione + L-homocysteine. Its function is as follows. Involved in the synthesis of autoinducer 2 (AI-2) which is secreted by bacteria and is used to communicate both the cell density and the metabolic potential of the environment. The regulation of gene expression in response to changes in cell density is called quorum sensing. Catalyzes the transformation of S-ribosylhomocysteine (RHC) to homocysteine (HC) and 4,5-dihydroxy-2,3-pentadione (DPD). The polypeptide is S-ribosylhomocysteine lyase (Shewanella sediminis (strain HAW-EB3)).